Reading from the N-terminus, the 890-residue chain is Chloroquine resistance transporter (890 aa).

Disordered regions lie at residues 1-163 (MPPA…EAPL) and 280-300 (GMQRPCFGSPSTDTRMGAAEG). Residues 1 to 349 (MPPAHHGSGG…RATRWIDRNA (349 aa)) lie on the Cytoplasmic side of the membrane. The span at 8 to 19 (SGGRRRPGRGNK) shows a compositional bias: basic residues. Low complexity-rich tracts occupy residues 102–126 (APSQSDLPPSLSPTTASRPATSSRS) and 134–156 (SPVASSSAFSSPAPSASALTSAS). A helical membrane pass occupies residues 350–372 (ATVRVACYTFLLLVTSTGNTICF). The Vacuolar segment spans residues 373–391 (KKMIDKMPNYSPCLTQVTT). A helical membrane pass occupies residues 392–412 (VVFVPVFFALSLYTDYAGGLP). Residues 413–422 (QEMADFPKRN) lie on the Cytoplasmic side of the membrane. The chain crosses the membrane as a helical span at residues 423-443 (FAVMGFLDSFSGVMAIIGAVH). Residues 444–447 (TTGT) are Vacuolar-facing. The chain crosses the membrane as a helical span at residues 448–468 (TQVVLQQSCIVFSLLASIVML). At 469 to 471 (RKR) the chain is on the cytoplasmic side. A helical membrane pass occupies residues 472–492 (FHAAHYLGALVIILGVLVVKL). Over 493–505 (PDLLHPSSDGGGD) the chain is Vacuolar. Residues 506-526 (VFVFNLLYLLSNLPTAVSCVY) form a helical membrane-spanning segment. The Cytoplasmic segment spans residues 527–544 (KEVAFRGVEMGTNYLQAW). Residues 545–565 (VALFQFLIGFLVLPLNALPVL) form a helical membrane-spanning segment. Over 566–614 (GPQRVPLAELPASLWNGTRCLFGFNTIVTNCGGAGNMESPCDNCEGAWK) the chain is Vacuolar. The N-linked (GlcNAc...) asparagine glycan is linked to asparagine 581. 2 disulfides stabilise this stretch: cysteine 585–cysteine 609 and cysteine 596–cysteine 606. A helical transmembrane segment spans residues 615 to 634 (YVGMYLSFNLLYNMFIIFVV). Residues 635–640 (KSGGAA) are Cytoplasmic-facing. A helical membrane pass occupies residues 641–663 (LTFLVSTLRLPVTALAFCSRAIM). Residues 664-673 (GDRAVPPKAT) lie on the Vacuolar side of the membrane. Residues 674–694 (DFYGLLVLILGLVIYRAGGIM) form a helical membrane-spanning segment. Topologically, residues 695 to 890 (KRRAQRRAVA…GKSRANNGCI (196 aa)) are cytoplasmic. Residues 798–871 (AAFTPFTQRM…NRVGGYEPPS (74 aa)) are disordered.

This sequence belongs to the CRT-like transporter family.

The protein resides in the vacuole membrane. Nutrient transporter. Involved in maintaining the osmotic homeostasis of the digestive vacuole. Required for the proper organization of the endolysosomal system and, in turn, indirectly for microneme secretion and parasite invasion. Required for bradyzoite viability and cyst development. The polypeptide is Chloroquine resistance transporter (Toxoplasma gondii).